The primary structure comprises 156 residues: MNATRKQRLWLVIGVLAAAALAVTLIVFALQRNMSYLFTPSQVRAGEAAGYQQFRLGGMVKAGSIQRAGDSLKVSFIVIDKNAATQVEYTGILPDLFRDNQSVIANGRMQGGRFVANEVLAKHDETYMPKELKDAMAQGHLGKPVPATVAPLTAPR.

Over 1–8 (MNATRKQR) the chain is Cytoplasmic. Residues 9 to 29 (LWLVIGVLAAAALAVTLIVFA) traverse the membrane as a helical; Signal-anchor for type II membrane protein segment. Residues 30-156 (LQRNMSYLFT…ATVAPLTAPR (127 aa)) lie on the Periplasmic side of the membrane. The heme site is built by H123 and Y127.

This sequence belongs to the CcmE/CycJ family.

It localises to the cell inner membrane. In terms of biological role, heme chaperone required for the biogenesis of c-type cytochromes. Transiently binds heme delivered by CcmC and transfers the heme to apo-cytochromes in a process facilitated by CcmF and CcmH. This Xanthomonas axonopodis pv. citri (strain 306) protein is Cytochrome c-type biogenesis protein CcmE 1.